The sequence spans 175 residues: Polyadenylate-binding protein-interacting protein 6 (175 aa).

A PAM2-like motif is present at residues 7–17 (TLNPYAAAYVP). Positions 83–126 (EMDMDIEYLLATYPGLSQESINDVYLANTCDLDATIEMLNQLEI) constitute a CUE domain. A disordered region spans residues 145–175 (PEIITESSKQKNDGSSASSSSGIRNANVSSS). Positions 166-175 (GIRNANVSSS) are enriched in polar residues.

The protein is Polyadenylate-binding protein-interacting protein 6 (CID6) of Arabidopsis thaliana (Mouse-ear cress).